A 1004-amino-acid chain; its full sequence is MTIMDIDDHSRLRDLAVSLIRQAAEGYSPKYGYGSMSCAAYDTAWVSLVAKPFNGIKKWLFPQSFKFLLENQENDGSWGRQTSPVDRILNTAAPLLSLQRHAREPLQLHDVCEDGDLDDRIHRATLSLQRQLSDWDIASTAHVGFEIIVPALLNLLAAEGLCFSFKAQDELMKVNAAKLKRFDPEVLLYGKHKTTLLHSLEAFVGIIDFDKVVHHKVGGSFMASPSATAAYLMNASCWDDEAEDYIKNVLVNGSGRGHGAVPSAYPSSNFEYSWLLSTLLHAGFTAKDIECPELCDVAGMLENSFIEGQGTIGFARSISSDADDTAKAAFALNKLGYDVSVNEMVKEFEVKNHFQTYPSERDASLSANCNTLLALLHQKQVGAYQPQILKCVKFLTRCWWNTDGPIRDKWNQSHLYSTMLMVQALTEFQAILDQKGLPYGLNTVEMARVSICLFQGCLRTMLQQCEDGSWSHSREQTAYAVLTLGQARRLSTFKHLQSQIDSAIDQAATFIRLHSVDLAQQSLPEFIWTEKVSYTSPLVTEAYCLAALKVATSLVDNPGIVGESLDLGIPSRQRIDKYIWLFHQTPLFRSLPEWQLRASFIEGHLFLPIVNEHRLDVFPRKNMDPDDDYIRLIPFTWTATNNRNFTFASPAWLYDMIMVSVVDYQADEFMEAVAGLTFSEDLSMLVGLIQEVLTPYKTEPASPVTSLIDMSSVQCPRAKLSNIASGDIEEVRTCLRRFASFFLDHPAVRNAQRDDRATAWREVHNYLVAHVRHTQDNMRLNLQEQRRWYVSRNMPYFHWVRSNDDIACPITFGFVTCLVPYLVANPTVERAVIGNESESIVTSSDVSFDSVESKYYADDVCRHITNVTRIYNDCGSVVRDATEKNLNSVNFPEFAVTASGSEKQALRAMGEYERACCQAAFQRLEEASLQTATTEAERAKRRRRLDVWKVFLDTADPYGQIYVVRDFTARSVHVRETGIASTAKDVPLVSSSVPLVGGGPMLVT.

The DXDD motif motif lies at 321–324 (DADD). Residues D667, E671, N872, D873, S876, and D880 each contribute to the Mg(2+) site. Positions 667–671 (DEFME) match the DEXXE motif motif.

The protein belongs to the terpene synthase family. Requires Mg(2+) as cofactor.

It carries out the reaction (2E,6E,10E)-geranylgeranyl diphosphate = (+)-copalyl diphosphate. It catalyses the reaction (+)-copalyl diphosphate + H2O = phyllocladan-16alpha-ol + diphosphate. Its function is as follows. Involved in the synthesis of labdane-related hydrocarbons by catalyzing the conversion of geranylgeranyl diphosphate (GGDP) to phyllocladan-16-alpha-ol in a two step via type B cyclization into a (+)-copalyl diphosphate ((+)-CDP) intermediate. The polypeptide is Phyllocladan-16-alpha-ol synthase (PaDC1) (Phomopsis amygdali (Fusicoccum amygdali)).